The sequence spans 358 residues: Protein ocs (358 aa).

Belongs to the lysopine/nopaline/octopine/opine/vitopine dehydrogenases family.

It catalyses the reaction D-octopine + NAD(+) + H2O = L-arginine + pyruvate + NADH + H(+). It carries out the reaction D-lysopine + NADP(+) + H2O = L-lysine + pyruvate + NADPH + H(+). Its function is as follows. Reductive condensation of pyruvate and arginine, lysine, histidine, or octopine to form octopine, lysopine, histopine, or octopinic acid, respectively. NADPH is the preferred cofactor, but NADH can also be used. This chain is Protein ocs (ocs), found in Agrobacterium vitis (Rhizobium vitis).